The sequence spans 126 residues: Fluoride-specific ion channel FluC (126 aa).

The next 3 helical transmembrane spans lie at 33–53 (LPLNVLIVNVIGAFILGVFIV), 64–84 (YSLFAAIGFCGSLTTMSSFAL), and 96–116 (GALAANIIVNVGLSIGALIGG). The Na(+) site is built by glycine 74 and threonine 77.

This sequence belongs to the fluoride channel Fluc/FEX (TC 1.A.43) family.

Its subcellular location is the cell membrane. It catalyses the reaction fluoride(in) = fluoride(out). Its activity is regulated as follows. Na(+) is not transported, but it plays an essential structural role and its presence is essential for fluoride channel function. Its function is as follows. Fluoride-specific ion channel. Important for reducing fluoride concentration in the cell, thus reducing its toxicity. The polypeptide is Fluoride-specific ion channel FluC (Nitrosopumilus maritimus (strain SCM1)).